Reading from the N-terminus, the 528-residue chain is Probable feruloyl esterase B-1 (528 aa).

A signal peptide spans Met1 to Ser19. 6 disulfide bridges follow: Cys29–Cys78, Cys64–Cys117, Cys190–Cys445, Cys259–Cys276, Cys285–Cys295, and Cys505–Cys527. N-linked (GlcNAc...) asparagine glycosylation is found at Asn83 and Asn101. Residue Ser191 is the Acyl-ester intermediate of the active site. Ca(2+)-binding residues include Asp260, Asp263, Ala265, Asp267, and Ile269. N-linked (GlcNAc...) asparagine glycans are attached at residues Asn286, Asn354, and Asn385. Catalysis depends on charge relay system residues Asp404 and His444.

Belongs to the tannase family.

The protein localises to the secreted. It catalyses the reaction feruloyl-polysaccharide + H2O = ferulate + polysaccharide.. Its function is as follows. Involved in degradation of plant cell walls. Hydrolyzes the feruloyl-arabinose ester bond in arabinoxylans as well as the feruloyl-galactose and feruloyl-arabinose ester bonds in pectin. The polypeptide is Probable feruloyl esterase B-1 (faeB-1) (Aspergillus fumigatus (strain ATCC MYA-4609 / CBS 101355 / FGSC A1100 / Af293) (Neosartorya fumigata)).